Here is a 150-residue protein sequence, read N- to C-terminus: 3-hydroxyacyl-[acyl-carrier-protein] dehydratase FabZ (150 aa).

His-54 is an active-site residue.

This sequence belongs to the thioester dehydratase family. FabZ subfamily.

The protein localises to the cytoplasm. It carries out the reaction a (3R)-hydroxyacyl-[ACP] = a (2E)-enoyl-[ACP] + H2O. Involved in unsaturated fatty acids biosynthesis. Catalyzes the dehydration of short chain beta-hydroxyacyl-ACPs and long chain saturated and unsaturated beta-hydroxyacyl-ACPs. This chain is 3-hydroxyacyl-[acyl-carrier-protein] dehydratase FabZ, found in Chromobacterium violaceum (strain ATCC 12472 / DSM 30191 / JCM 1249 / CCUG 213 / NBRC 12614 / NCIMB 9131 / NCTC 9757 / MK).